Here is a 56-residue protein sequence, read N- to C-terminus: Alpha-conotoxin TxIA (56 aa).

Positions 1-16 (MFTVFLLVVLATAVVS) are cleaved as a signal peptide. The propeptide occupies 17–39 (FTSDRASDDGKAAASDLITLTIK). 2 disulfide bridges follow: C41/C47 and C42/C55. Positions 43-45 (SRP) are ser-Xaa-Pro motif, crucial for potent interaction with nAChR. Residues P45 and P46 each carry the 4-hydroxyproline; partial modification. A Cysteine amide modification is found at C55.

This sequence belongs to the conotoxin A superfamily. In terms of processing, exists in 4 different forms, depending on hydroxylations. Tx1a-PP does not contain hydroxyproline, tx1a-OP has one hydroxyproline at position 45, tx1a-PO has one hydroxyproline at position 46, and tx1a-PP has two hydroxyprolines at positions 45 and 46. Expressed by the venom duct. Tx1a that containing 1 or 2 non-hydroxylated prolines are mostly present in part 5 of the venom duct (distal part near the pharynx), whereas tx1a-OO (with 2 hydroxyprolines) is mostly present in part 4 of the venom duct (follewed by part 3).

It is found in the secreted. Alpha-conotoxins act on postsynaptic membranes, they bind to the nicotinic acetylcholine receptors (nAChR) and thus inhibit them. This toxin inhibits rat alpha-3-beta-2/CHRNA3-CHRNB2 (IC(50)=3.5 nM), rat alpha-7/CHRNA7 (IC(50)=392 nM) nAChR, and the L.stagnalis soluble acetylcholine receptor (all tested without hydroxyproline). This is Alpha-conotoxin TxIA from Conus textile (Cloth-of-gold cone).